The sequence spans 739 residues: Phosphoribosylformylglycinamidine synthase subunit PurL (739 aa).

Residue His53 is part of the active site. ATP contacts are provided by Tyr56 and Lys95. Glu97 contacts Mg(2+). Substrate is bound by residues 98–101 (SHNH) and Arg120. The active-site Proton acceptor is His99. Position 121 (Asp121) interacts with Mg(2+). A substrate-binding site is contributed by Gln244. Residue Asp274 coordinates Mg(2+). Residue 318 to 320 (ESQ) coordinates substrate. The ATP site is built by Asp501 and Gly538. Residue Asn539 participates in Mg(2+) binding. Ser541 is a substrate binding site.

This sequence belongs to the FGAMS family. In terms of assembly, monomer. Part of the FGAM synthase complex composed of 1 PurL, 1 PurQ and 2 PurS subunits.

It is found in the cytoplasm. It catalyses the reaction N(2)-formyl-N(1)-(5-phospho-beta-D-ribosyl)glycinamide + L-glutamine + ATP + H2O = 2-formamido-N(1)-(5-O-phospho-beta-D-ribosyl)acetamidine + L-glutamate + ADP + phosphate + H(+). It functions in the pathway purine metabolism; IMP biosynthesis via de novo pathway; 5-amino-1-(5-phospho-D-ribosyl)imidazole from N(2)-formyl-N(1)-(5-phospho-D-ribosyl)glycinamide: step 1/2. Functionally, part of the phosphoribosylformylglycinamidine synthase complex involved in the purines biosynthetic pathway. Catalyzes the ATP-dependent conversion of formylglycinamide ribonucleotide (FGAR) and glutamine to yield formylglycinamidine ribonucleotide (FGAM) and glutamate. The FGAM synthase complex is composed of three subunits. PurQ produces an ammonia molecule by converting glutamine to glutamate. PurL transfers the ammonia molecule to FGAR to form FGAM in an ATP-dependent manner. PurS interacts with PurQ and PurL and is thought to assist in the transfer of the ammonia molecule from PurQ to PurL. The protein is Phosphoribosylformylglycinamidine synthase subunit PurL of Listeria monocytogenes serotype 4a (strain HCC23).